The primary structure comprises 138 residues: Acidic phospholipase A2 pgPLA 1b/pgPLA 2b (138 aa).

A signal peptide spans 1–16 (MRTLWIMAVLLVGVKG). Intrachain disulfides connect cysteine 42-cysteine 131, cysteine 44-cysteine 60, cysteine 59-cysteine 111, cysteine 65-cysteine 138, cysteine 66-cysteine 104, cysteine 73-cysteine 97, and cysteine 91-cysteine 102. Residues tyrosine 43, glycine 45, and glycine 47 each coordinate Ca(2+). Histidine 63 is a catalytic residue. Aspartate 64 contributes to the Ca(2+) binding site. Residue aspartate 105 is part of the active site.

It belongs to the phospholipase A2 family. Group II subfamily. D49 sub-subfamily. Ca(2+) is required as a cofactor. In terms of tissue distribution, expressed by the venom gland.

The protein localises to the secreted. The catalysed reaction is a 1,2-diacyl-sn-glycero-3-phosphocholine + H2O = a 1-acyl-sn-glycero-3-phosphocholine + a fatty acid + H(+). Functionally, PLA2 catalyzes the calcium-dependent hydrolysis of the 2-acyl groups in 3-sn-phosphoglycerides. This Protobothrops flavoviridis (Habu) protein is Acidic phospholipase A2 pgPLA 1b/pgPLA 2b.